The primary structure comprises 633 residues: DEAD-box ATP-dependent RNA helicase 27 (633 aa).

Residues 1–17 (MANLDMEQHSSENEEIK) show a composition bias toward basic and acidic residues. The tract at residues 1-147 (MANLDMEQHS…DKEEEKKLEE (147 aa)) is disordered. The stretch at 2 to 34 (ANLDMEQHSSENEEIKKKKHKKRARDEAKKLKQ) forms a coiled coil. Acidic residues-rich tracts occupy residues 37 to 47 (MEEEPDHEDGD) and 74 to 83 (DDGEDEAVAE). Basic residues predominate over residues 88–97 (KKKKKNKKLQ). Acidic residues-rich tracts occupy residues 103 to 114 (NDEEDEVIAEEE) and 131 to 140 (SEEEEVEDKE). A coiled-coil region spans residues 117–153 (KKKKKKQRKDTEAKSEEEEVEDKEEEKKLEETSIMTN). The Q motif signature appears at 154–182 (KTFESLSLSDNTYKSIKEMGFARMTQIQA). The Helicase ATP-binding domain occupies 185–360 (IPPLMMGEDV…RVSLTSPVYI (176 aa)). 198-205 (ARTGSGKT) contacts ATP. The DEAD box signature appears at 308-311 (DEAD). The region spanning 386–534 (RLLFLLTFLK…EHEFEEKKLL (149 aa)) is the Helicase C-terminal domain. Positions 608–633 (KREPVNKFKRGRGGGRPGGKSKFERY) are disordered.

It belongs to the DEAD box helicase family. DDX18/HAS1 subfamily.

The catalysed reaction is ATP + H2O = ADP + phosphate + H(+). The chain is DEAD-box ATP-dependent RNA helicase 27 (RH27) from Arabidopsis thaliana (Mouse-ear cress).